The primary structure comprises 699 residues: Glutamine--fructose-6-phosphate aminotransferase [isomerizing] (699 aa).

The active-site Nucleophile is the Cys-2. The Glutamine amidotransferase type-2 domain maps to 2–303 (CGIFGYANFS…DNDIVHISNG (302 aa)). SIS domains lie at 377 to 516 (HVSG…QNLV) and 544 to 689 (SVKS…ADFP).

It catalyses the reaction D-fructose 6-phosphate + L-glutamine = D-glucosamine 6-phosphate + L-glutamate. Its pathway is nucleotide-sugar biosynthesis; UDP-N-acetyl-alpha-D-glucosamine biosynthesis; alpha-D-glucosamine 6-phosphate from D-fructose 6-phosphate: step 1/1. In terms of biological role, involved in amino sugar synthesis (formation of chitin, supplies the amino sugars of asparagine-linked oligosaccharides of glycoproteins). This is Glutamine--fructose-6-phosphate aminotransferase [isomerizing] (GFA1) from Encephalitozoon cuniculi (strain GB-M1) (Microsporidian parasite).